The following is a 530-amino-acid chain: UDP-glucuronosyltransferase 2B31 (530 aa).

The signal sequence occupies residues 1-24 (MSMKWISVLLGLQLSCYFSSGSCG). K136 is modified (N6-succinyllysine). Residue N316 is glycosylated (N-linked (GlcNAc...) asparagine). The chain crosses the membrane as a helical span at residues 495 to 515 (IGFLLACVATAIFVTTQCCLF).

This sequence belongs to the UDP-glycosyltransferase family.

The protein localises to the microsome membrane. It is found in the endoplasmic reticulum membrane. It catalyses the reaction glucuronate acceptor + UDP-alpha-D-glucuronate = acceptor beta-D-glucuronoside + UDP + H(+). Its function is as follows. UDPGTs are of major importance in the conjugation and subsequent elimination of potentially toxic xenobiotics and endogenous compounds. This isozyme has glucuronidating capacity on phenols, opioids, and carboxylic acid-containing drugs. This Canis lupus familiaris (Dog) protein is UDP-glucuronosyltransferase 2B31 (UGT2B31).